The chain runs to 393 residues: Fasciculation and elongation protein zeta-1 (393 aa).

The interval 1–41 (MEAPLVSLDEEFEDIRPCCTEDPEEKPQSLYGTSPHHLEDP) is disordered. Position 58 is a phosphoserine (Ser-58). Positions 130-154 (NGNSSDTEIHEKEEEDEFIEKSEND) are disordered. A coiled-coil region spans residues 231-299 (SELTELLDQV…KKRRKEKGLS (69 aa)). 2 positions are modified to phosphoserine: Ser-299 and Ser-317.

It belongs to the zygin family. In terms of assembly, homodimer. Interacts with UBE4B and SAP30L. Interacts with SCOC and ULK1; SCOC interferes with ULK1-binding to FEZ1. Directly interacts with SCOC and UVRAG. Stabilizes the interaction between SCOC and UVRAG during amino acid starvation. Interacts with the NH2-terminal variable region (V1) of PKC zeta and weakly with that of PKC epsilon. Post-translationally, phosphorylated by protein kinase C zeta; which enhances interaction with UBE4B and polyubiquitination. In terms of processing, polyubiquitinated in a UBE4B-dependent manner; which does not lead to proteasomal degradation and may be important for neurogenic activity. Polyubiquitin linkage seems to be mainly through Lys-26. As to expression, brain.

The protein resides in the cytoplasm. Its subcellular location is the cytoskeleton. The protein localises to the microtubule organizing center. It is found in the centrosome. It localises to the cell membrane. Its function is as follows. May be involved in axonal outgrowth as component of the network of molecules that regulate cellular morphology and axon guidance machinery. May participate in the transport of mitochondria and other cargos along microtubules. The chain is Fasciculation and elongation protein zeta-1 (Fez1) from Rattus norvegicus (Rat).